The sequence spans 191 residues: Small ribosomal subunit protein uS5 (191 aa).

An S5 DRBM domain is found at 21 to 84 (LVDKLVTINR…ERAKRTMIRV (64 aa)). The tract at residues 161 to 191 (PRHVASRRGKKAAELFGKREQGQTEAEVTNG) is disordered. The segment covering 171 to 182 (KAAELFGKREQG) has biased composition (basic and acidic residues).

This sequence belongs to the universal ribosomal protein uS5 family. As to quaternary structure, part of the 30S ribosomal subunit. Contacts proteins S4 and S8.

Functionally, with S4 and S12 plays an important role in translational accuracy. Located at the back of the 30S subunit body where it stabilizes the conformation of the head with respect to the body. This is Small ribosomal subunit protein uS5 from Gluconobacter oxydans (strain 621H) (Gluconobacter suboxydans).